The primary structure comprises 151 residues: Large ribosomal subunit protein uL22c (151 aa).

Belongs to the universal ribosomal protein uL22 family. As to quaternary structure, part of the 50S ribosomal subunit.

Its subcellular location is the plastid. The protein localises to the chloroplast. This protein binds specifically to 23S rRNA. Functionally, the globular domain of the protein is located near the polypeptide exit tunnel on the outside of the subunit, while an extended beta-hairpin is found that lines the wall of the exit tunnel in the center of the 70S ribosome. This Gossypium barbadense (Sea Island cotton) protein is Large ribosomal subunit protein uL22c (rpl22).